A 170-amino-acid chain; its full sequence is Calcineurin subunit B type 2 (170 aa).

4 consecutive EF-hand domains span residues 18-46 (DEIRRLGKRFRKLDLDNSGALSVDEFMSL), 50-85 (QQNPLVQRVIDIFDADGNGEVDFKEFIQGVSQFSVK), 87-122 (DKLSKLRFAFRIYDMDNDGYISNGELFQVLKMMVGN), and 128-163 (QLQQIVDKTIGFADKDEDGKISFDEFCSVVGNTDIH). The Ca(2+) site is built by Asp31, Asp33, Ser35, Glu42, Asp63, Asp65, Asn67, Glu69, Glu74, Asp100, Asp102, Asp104, Tyr106, Glu111, Asp141, Asp143, Asp145, Lys147, and Glu152. Phosphoserine is present on Ser35.

It belongs to the calcineurin regulatory subunit family. As to quaternary structure, composed of a catalytic subunit (A) and a regulatory subunit (B). Interacts with sra.

Its function is as follows. Calcineurin is a calcium-binding and calmodulin-binding protein found in all cells from yeast to mammals, and a calcium-dependent, calmodulin-stimulated protein phosphatase. This chain is Calcineurin subunit B type 2 (CanB2), found in Drosophila melanogaster (Fruit fly).